Consider the following 201-residue polypeptide: Large ribosomal subunit protein uL18 (201 aa).

This sequence belongs to the universal ribosomal protein uL18 family. As to quaternary structure, part of the 50S ribosomal subunit. Contacts the 5S and 23S rRNAs.

Its function is as follows. This is one of the proteins that bind and probably mediate the attachment of the 5S RNA into the large ribosomal subunit, where it forms part of the central protuberance. This chain is Large ribosomal subunit protein uL18, found in Thermococcus onnurineus (strain NA1).